Reading from the N-terminus, the 362-residue chain is Quinolone epoxide rearrangement protein penF (362 aa).

The active site involves H220. The active-site Broensted acid is the E222.

This sequence belongs to the quinolone epoxide rearrangement protein penF family.

The enzyme catalyses [(1'E)-5'-(3',3'-dimethyloxiran-2'-yl)-3'-hydroxy-3'-methylpent-1'-en-1'-yl]-quinolinone B = yaequinolone D. The protein operates within secondary metabolite biosynthesis. Its pathway is alkaloid biosynthesis. It functions in the pathway mycotoxin biosynthesis. In terms of biological role, quinolone epoxide rearrangement protein; part of the gene cluster that mediates the biosynthesis of penigequinolones, potent insecticidal alkaloids that contain a highly modified 10-carbon prenyl group. The first stage is catalyzed by the nonribosomal peptide synthetase penN that condenses anthranilic acid and O-methyl-L-tyrosine to produce 4'-methoxycyclopeptin. 4'-methoxycyclopeptin is then converted to 4'-methoxydehydrocyclopeptin by the ketoglutarate-dependent dioxygenase penM through dehydrogenation to form a double bond between C-alpha and C-beta of the O-methyltyrosine side chain. PenM also converts its first product methoxydehydrocyclopeptin to 4'-methoxycyclopenin. The following conversion of 4'methoxycyclopenin into 4'-methoxyviridicatin is catalyzed by the cyclopenase penL. 4'-methoxyviridicatin is the precursor of quinolone natural products, and is further converted to quinolinone B. The prenyltransferase penI then catalyzes the canonical Friedel-Crafts alkylation of quinolinone B with dimethylallyl cation to yield dimethylallyl quinolone, which is subjected to FAD-dependent dehydrogenation by the FAD-linked oxidoreductase penH to yield conjugated aryl diene. The delta(3') double bond then serves as the site of the second alkylation with DMAPP catalyzed by the prenyltransferase penG to yield a carbenium ion intermediate, which can be attacked by H(2)O to yield a styrenyl quinolone containing a C3'-hydroxyprenyl chain, or undergo cyclization to yield yaequinolones J1 and J2. The conversion of the styrenyl quinolone into the tetrahydrofuran-containing yaequinolone C is performed by the FAD-dependent monooxygenase penE and involves epoxidation of the terminal C7'-C8' olefin, followed by epoxide ring opening initiated by the C3' hydroxyl group. The predicted cysteine hydrolase penJ acts as an epoxide hydrolase that enhances the rate of the 5-exo-tet cyclization step, increasing the yield of yaequinolone C. PenF catalyzes the cationic rearrangement of the epoxide formed by penE (before ring opening to produce yaequinolone C) into yaequinolone D. Finally, the short-chain dehydrogenase/reductase (SDR)-like reductase penD, catalyzes both the dehydration of yaequinolone D and the reduction of the resulting oxonium to yield penigequinolone. This chain is Quinolone epoxide rearrangement protein penF, found in Penicillium thymicola.